A 341-amino-acid chain; its full sequence is Ketol-acid reductoisomerase (NADP(+)) (341 aa).

The region spanning 1–181 (MARVYREGDI…GCARAGVLET (181 aa)) is the KARI N-terminal Rossmann domain. NADP(+) is bound by residues 24-27 (FGSQ), Ser50, Ser52, and 82-85 (DERQ). His107 is an active-site residue. Residue Gly133 coordinates NADP(+). The KARI C-terminal knotted domain maps to 182 to 327 (TFAEETETDL…AELRALAAEG (146 aa)). Residues Asp190, Glu194, Glu226, and Glu230 each contribute to the Mg(2+) site. Ser251 contacts substrate.

This sequence belongs to the ketol-acid reductoisomerase family. Requires Mg(2+) as cofactor.

It catalyses the reaction (2R)-2,3-dihydroxy-3-methylbutanoate + NADP(+) = (2S)-2-acetolactate + NADPH + H(+). The catalysed reaction is (2R,3R)-2,3-dihydroxy-3-methylpentanoate + NADP(+) = (S)-2-ethyl-2-hydroxy-3-oxobutanoate + NADPH + H(+). It participates in amino-acid biosynthesis; L-isoleucine biosynthesis; L-isoleucine from 2-oxobutanoate: step 2/4. Its pathway is amino-acid biosynthesis; L-valine biosynthesis; L-valine from pyruvate: step 2/4. Its function is as follows. Involved in the biosynthesis of branched-chain amino acids (BCAA). Catalyzes an alkyl-migration followed by a ketol-acid reduction of (S)-2-acetolactate (S2AL) to yield (R)-2,3-dihydroxy-isovalerate. In the isomerase reaction, S2AL is rearranged via a Mg-dependent methyl migration to produce 3-hydroxy-3-methyl-2-ketobutyrate (HMKB). In the reductase reaction, this 2-ketoacid undergoes a metal-dependent reduction by NADPH to yield (R)-2,3-dihydroxy-isovalerate. In Rubrobacter xylanophilus (strain DSM 9941 / JCM 11954 / NBRC 16129 / PRD-1), this protein is Ketol-acid reductoisomerase (NADP(+)).